The chain runs to 207 residues: LexA repressor (207 aa).

The segment at residues 28 to 48 is a DNA-binding region (H-T-H motif); the sequence is RAEIARHLGFKSANAAEEHLK. Catalysis depends on for autocatalytic cleavage activity residues Ser124 and Lys161.

Belongs to the peptidase S24 family. As to quaternary structure, homodimer.

The catalysed reaction is Hydrolysis of Ala-|-Gly bond in repressor LexA.. In terms of biological role, represses a number of genes involved in the response to DNA damage (SOS response), including recA and lexA. In the presence of single-stranded DNA, RecA interacts with LexA causing an autocatalytic cleavage which disrupts the DNA-binding part of LexA, leading to derepression of the SOS regulon and eventually DNA repair. The protein is LexA repressor of Pseudoalteromonas atlantica (strain T6c / ATCC BAA-1087).